The primary structure comprises 131 residues: Profilin-11 (131 aa).

Cys13 and Cys115 are oxidised to a cystine. The Involved in PIP2 interaction motif lies at Ala81–Thr97. At Thr111 the chain carries Phosphothreonine.

It belongs to the profilin family. As to quaternary structure, occurs in many kinds of cells as a complex with monomeric actin in a 1:1 ratio. In terms of processing, phosphorylated by MAP kinases.

The protein localises to the cytoplasm. The protein resides in the cytoskeleton. In terms of biological role, binds to actin and affects the structure of the cytoskeleton. At high concentrations, profilin prevents the polymerization of actin, whereas it enhances it at low concentrations. The protein is Profilin-11 of Zea mays (Maize).